A 116-amino-acid chain; its full sequence is uncharacterized protein (116 aa).

This is an uncharacterized protein from Acidianus filamentous virus 1 (isolate United States/Yellowstone) (AFV-1).